A 77-amino-acid chain; its full sequence is Translational regulator CsrA (77 aa).

The disordered stretch occupies residues 58–77 (ANRRTAEETLDQASRLLSQK). Residues 68-77 (DQASRLLSQK) are compositionally biased toward polar residues.

This sequence belongs to the CsrA/RsmA family. As to quaternary structure, homodimer; the beta-strands of each monomer intercalate to form a hydrophobic core, while the alpha-helices form wings that extend away from the core.

The protein localises to the cytoplasm. Its function is as follows. A translational regulator that binds mRNA to regulate translation initiation and/or mRNA stability. Usually binds in the 5'-UTR at or near the Shine-Dalgarno sequence preventing ribosome-binding, thus repressing translation. Its main target seems to be the major flagellin gene, while its function is anatagonized by FliW. This is Translational regulator CsrA from Magnetococcus marinus (strain ATCC BAA-1437 / JCM 17883 / MC-1).